The sequence spans 564 residues: Septation ring formation regulator EzrA (564 aa).

Over 1-2 the chain is Extracellular; the sequence is MV. The chain crosses the membrane as a helical span at residues 3–21; the sequence is FVISVILAIIVILTIGLIL. Over 22–564 the chain is Cytoplasmic; sequence RKRIYDKVDH…IEENQLTLNR (543 aa). 4 coiled-coil regions span residues 101–140, 168–215, 251–436, and 468–537; these read ANNI…REEV, FDKK…MEQF, GFDK…KKSN, and DIAK…ELSL.

It belongs to the EzrA family.

It is found in the cell membrane. Its function is as follows. Negative regulator of FtsZ ring formation; modulates the frequency and position of FtsZ ring formation. Inhibits FtsZ ring formation at polar sites. Interacts either with FtsZ or with one of its binding partners to promote depolymerization. The sequence is that of Septation ring formation regulator EzrA from Oceanobacillus iheyensis (strain DSM 14371 / CIP 107618 / JCM 11309 / KCTC 3954 / HTE831).